We begin with the raw amino-acid sequence, 203 residues long: Early nodulin-like protein 9 (203 aa).

The N-terminal stretch at 1–27 (MARNLKSMMLCGFGLLCFLMIVDRAYA) is a signal peptide. The 103-residue stretch at 28–130 (REFTVGGATG…NEKLVVIVMA (103 aa)) folds into the Phytocyanin domain. Cysteines 84 and 118 form a disulfide. Asn103 carries N-linked (GlcNAc...) asparagine glycosylation. The segment at 134–181 (GNKNTASSPPSPAPAPSGESAPSPPVSGTFEMTPAPTPTTSEDTPNSA) is disordered. A lipid anchor (GPI-anchor amidated serine) is attached at Ser180. A propeptide spans 181 to 203 (AASSLSFVAALLGAALASTLFLH) (removed in mature form).

It belongs to the early nodulin-like (ENODL) family. As to expression, specifically observed at the plasma membrane of sieve elements in vascular tissues of leaves, stems, roots, flowers and reproductive organs. Absent from companion cells.

Its subcellular location is the cell membrane. In terms of biological role, may act as a carbohydrate transporter. Mainly required for reproductive functions. The chain is Early nodulin-like protein 9 from Arabidopsis thaliana (Mouse-ear cress).